Reading from the N-terminus, the 429-residue chain is Glutamate-1-semialdehyde 2,1-aminomutase (429 aa).

Lys-265 is modified (N6-(pyridoxal phosphate)lysine).

The protein belongs to the class-III pyridoxal-phosphate-dependent aminotransferase family. HemL subfamily. Homodimer. Requires pyridoxal 5'-phosphate as cofactor.

It localises to the cytoplasm. The enzyme catalyses (S)-4-amino-5-oxopentanoate = 5-aminolevulinate. Its pathway is porphyrin-containing compound metabolism; protoporphyrin-IX biosynthesis; 5-aminolevulinate from L-glutamyl-tRNA(Glu): step 2/2. This Legionella pneumophila (strain Lens) protein is Glutamate-1-semialdehyde 2,1-aminomutase.